The primary structure comprises 88 residues: Small ribosomal subunit protein bS20 (88 aa).

Disordered regions lie at residues 1 to 29 (MANT…SKLR) and 69 to 88 (KNTA…AMAA).

It belongs to the bacterial ribosomal protein bS20 family.

Binds directly to 16S ribosomal RNA. In Polynucleobacter asymbioticus (strain DSM 18221 / CIP 109841 / QLW-P1DMWA-1) (Polynucleobacter necessarius subsp. asymbioticus), this protein is Small ribosomal subunit protein bS20.